The sequence spans 287 residues: 4-hydroxybenzoate octaprenyltransferase (287 aa).

6 helical membrane passes run tryptophan 41–methionine 61, tryptophan 89–leucine 109, phenylalanine 133–phenylalanine 153, asparagine 158–tyrosine 178, leucine 218–tryptophan 238, and asparagine 267–serine 287.

It belongs to the UbiA prenyltransferase family. The cofactor is Mg(2+).

Its subcellular location is the cell inner membrane. It catalyses the reaction all-trans-octaprenyl diphosphate + 4-hydroxybenzoate = 4-hydroxy-3-(all-trans-octaprenyl)benzoate + diphosphate. It participates in cofactor biosynthesis; ubiquinone biosynthesis. Catalyzes the prenylation of para-hydroxybenzoate (PHB) with an all-trans polyprenyl group. Mediates the second step in the final reaction sequence of ubiquinone-8 (UQ-8) biosynthesis, which is the condensation of the polyisoprenoid side chain with PHB, generating the first membrane-bound Q intermediate 3-octaprenyl-4-hydroxybenzoate. The sequence is that of 4-hydroxybenzoate octaprenyltransferase from Burkholderia multivorans (strain ATCC 17616 / 249).